A 1013-amino-acid chain; its full sequence is MADSQDDKLYKAEYAKSGRASCKKCKDNIAKDSLRMAIMVQSPMFDGKVPHWHHFSCFWLRAAVQSPSDISGFTDLRWDDQEKVKTAIESGGATGGKGGQKGAAKGEKTLNDFAVEYAKSNRSTCKGCDQKIEKDQIRVSKKTVDPEKPQLGLIDRWYHTGCFVSRREELIFKPEYSAAQLKGFAVLRDEDKEELKKRLPAVKSEGKRKADEVDGGVSKKQKKEDEKLEQNLKDQSQLIWGIKDKLKKFCSINDMKELLIANSQEVPSGESNIVDRLSDCMAFGSLKPCETCKGQLVFKSDAYYCTGDISAWTKCVFKTQTPDRKDWVTPKEFSEIPFLKKFKFKRQDRVFPKDAPPAAATPSSGSTTSAATSVSSASKNLTEAPADKPLTGMKLLAVGKLSKNKDDLKKFVEDLGGKITGTASKAALCISSKKEIEKMSKKMEEVRDAGVRVVADDFLTDIKESGKALQELISLHAISPWGAEVKVEAPAAAAATKSTGAHSSKSTGKVKEEEGGSKSKKMKLTVKGGAAVDPDSGLENCAHVLEQNGKIYSATLGLVDIVRGTNSYYKLQLLEDDVQKRYWVFRSWGRVGTTIGGNKLDKFYDKNSAMDNFCGVYEEKTGNAWASSNFTKYPNKFYPLEIDYGQDEEAVKKLTQSAGAKSQLEKPVQDLIRMIFDVESMKKAMVEFEIDLQKMPLGKLSKRQIQSAYSLLSEVQQAVADSSSESLILDLSNRFYTLIPHDFGMKKPPLLSNVDYIQQKVQMLDNLLDIEVAYSLLRGGVENNEKDPIDINYEKLKTKIEVVDKSSHEAQLILQYVKNTHAATHNTYTLDVEEIFKIEREGEYQRYRPFKELPNRQLLWHGSRTTNYAGILSQGLRIAPPEAPVTGYMFGKGVYFADMVSKSANYCHTSQADPVGLILLGEVALGNMHELKKASHITKLPKGKHSVKGLGRSAPDPRATVSLNGVDIPLGKGMNTNIDDTSLLYNEYIVYDVSQVNLKYLLKIRFNYQTSLW.

PARP-type zinc fingers lie at residues 10–92 and 113–203; these read YKAE…ESGG and FAVE…PAVK. Zn(2+)-binding residues include Cys22, Cys25, His54, Cys57, Cys125, Cys128, His159, and Cys162. A disordered region spans residues 202 to 228; it reads VKSEGKRKADEVDGGVSKKQKKEDEKL. A Nuclear localization signal motif is present at residues 207 to 209; the sequence is KRK. The region spanning 219–353 is the PADR1 zinc-binding domain; the sequence is KKQKKEDEKL…FKRQDRVFPK (135 aa). The segment at 284–326 is zinc ribbon; sequence GSLKPCETCKGQLVFKSDAYYCTGDISAWTKCVFKTQTPDRKD. 4 residues coordinate Zn(2+): Cys289, Cys292, Cys305, and Cys315. Residues 353 to 385 form a disordered region; that stretch reads KDAPPAAATPSSGSTTSAATSVSSASKNLTEAP. Residues 356 to 378 show a composition bias toward low complexity; it reads PPAAATPSSGSTTSAATSVSSAS. Residues 365 to 523 are automodification domain; that stretch reads GSTTSAATSV…EGGSKSKKMK (159 aa). Residues 385 to 461 form the BRCT domain; it reads PADKPLTGMK…RVVADDFLTD (77 aa). Residues Glu413, Glu435, Glu444, Glu445, Glu464, Glu471, Glu484, and Glu488 each carry the polyADP-ribosyl glutamic acid modification. Positions 494 to 507 are enriched in low complexity; that stretch reads AATKSTGAHSSKST. The disordered stretch occupies residues 494 to 522; it reads AATKSTGAHSSKSTGKVKEEEGGSKSKKM. Residues Glu512 and Glu513 each carry the polyADP-ribosyl glutamic acid modification. The region spanning 541 to 637 is the WGR domain; it reads CAHVLEQNGK…SNFTKYPNKF (97 aa). Residues 661–778 enclose the PARP alpha-helical domain; the sequence is KSQLEKPVQD…DIEVAYSLLR (118 aa). A PARP catalytic domain is found at 787-1013; sequence DPIDINYEKL…IRFNYQTSLW (227 aa). Residues 861-863, Gly870, Arg877, and Ser903 each bind NAD(+); that span reads HGS. Catalysis depends on Glu987, which acts as the For poly [ADP-ribose] polymerase activity.

It belongs to the ARTD/PARP family. As to quaternary structure, homodimer; PARP-type zinc-fingers from separate parp1 molecules form a dimer module that specifically recognizes DNA strand breaks. Post-translationally, poly-ADP-ribosylated on serine, glutamate and aspartate residues by autocatalysis. Auto-ADP-ribosylation on serine takes place following interaction with HPF1. Auto poly-ADP-ribosylation on serine residues promotes its dissociation from chromatin.

It localises to the chromosome. The protein localises to the nucleus. Its subcellular location is the nucleolus. It is found in the cytoplasm. The protein resides in the cytosol. It catalyses the reaction NAD(+) + (ADP-D-ribosyl)n-acceptor = nicotinamide + (ADP-D-ribosyl)n+1-acceptor + H(+).. The catalysed reaction is L-seryl-[protein] + NAD(+) = O-(ADP-D-ribosyl)-L-seryl-[protein] + nicotinamide + H(+). The enzyme catalyses L-aspartyl-[protein] + NAD(+) = 4-O-(ADP-D-ribosyl)-L-aspartyl-[protein] + nicotinamide. It carries out the reaction L-glutamyl-[protein] + NAD(+) = 5-O-(ADP-D-ribosyl)-L-glutamyl-[protein] + nicotinamide. It catalyses the reaction L-tyrosyl-[protein] + NAD(+) = O-(ADP-D-ribosyl)-L-tyrosyl-[protein] + nicotinamide + H(+). The catalysed reaction is L-histidyl-[protein] + NAD(+) = N(tele)-(ADP-D-ribosyl)-L-histidyl-[protein] + nicotinamide + H(+). With respect to regulation, ADP-ribosyltransferase activity is regulated via an allosteric activation mechanism. In absence of activation signal, parp1 is autoinhibited by the PARP alpha-helical domain (also named HD region), which prevents effective NAD(+)-binding. Activity is highly stimulated by signals, such as DNA strand breaks. Binding to damaged DNA unfolds the PARP alpha-helical domain, relieving autoinhibition. Poly-ADP-ribosyltransferase activity is tightly regulated and parp1 is removed from damaged chromatin following initial poly-ADP-ribosylation of chromatin to avoid prolonged residence (trapping) that has cytotoxic consequences. A number of factors or post-translational modifications (auto-poly-ADP-ribosylation) promote parp1 removal from chromatin. Functionally, poly-ADP-ribosyltransferase that mediates poly-ADP-ribosylation of proteins and plays a key role in DNA repair. Mediates glutamate, aspartate, serine, histidine or tyrosine ADP-ribosylation of proteins: the ADP-D-ribosyl group of NAD(+) is transferred to the acceptor carboxyl group of target residues and further ADP-ribosyl groups are transferred to the 2'-position of the terminal adenosine moiety, building up a polymer with an average chain length of 20-30 units. Serine ADP-ribosylation of proteins constitutes the primary form of ADP-ribosylation of proteins in response to DNA damage. Specificity for the different amino acids is conferred by interacting factors, such as hpf1 and nmnat1. Following interaction with hpf1, catalyzes serine ADP-ribosylation of target proteins; hpf1 confers serine specificity by completing the parp1 active site. Also catalyzes tyrosine ADP-ribosylation of target proteins following interaction with hpf1. Following interaction with nmnat1, catalyzes glutamate and aspartate ADP-ribosylation of target proteins; nmnat1 confers glutamate and aspartate specificity. Parp1 initiates the repair of DNA breaks: recognizes and binds DNA breaks within chromatin and recruits hpf1, licensing serine ADP-ribosylation of target proteins, such as histones (H2BS6ADPr and H3S10ADPr), thereby promoting decompaction of chromatin and the recruitment of repair factors leading to the reparation of DNA strand breaks. In addition to base excision repair (BER) pathway, also involved in double-strand breaks (DSBs) repair. Mediates the poly-ADP-ribosylation of a number of proteins. In addition to proteins, also able to ADP-ribosylate DNA: catalyzes ADP-ribosylation of DNA strand break termini containing terminal phosphates and a 2'-OH group in single- and double-stranded DNA, respectively. Parp1-mediated DNA repair in neurons plays a role in sleep: senses DNA damage in neurons and promotes sleep, facilitating efficient DNA repair. In addition to DNA repair, also involved in other processes, such as transcription regulation, programmed cell death, membrane repair, adipogenesis and innate immunity. Acts as a repressor of transcription: binds to nucleosomes and modulates chromatin structure in a manner similar to histone H1, thereby altering RNA polymerase II. Acts both as a positive and negative regulator of transcription elongation, depending on the context. Poly-ADP-ribose chains generated by parp1 also play a role in poly-ADP-ribose-dependent cell death, a process named parthanatos. Also acts as a negative regulator of the cGAS-STING pathway by mediating poly-ADP-ribosylation and inactivation of cgas. Acts as a negative regulator of adipogenesis by catalyzing poly ADP-ribosylation of histone H2B on 'Glu-35' (H2BE35ADPr). In Danio rerio (Zebrafish), this protein is Poly [ADP-ribose] polymerase 1.